Reading from the N-terminus, the 553-residue chain is MKQRLIVKTALSAAILATLAGCATQPTQEWAADTTYKLTVLHTNDHHGRFWQNKYGEYGMAARKTLIDELRAEIQAEGGSVLLLSGGDINTGVPESDLQDAEPDFKGMSKIGYDAMALGNHEFDNPLDVLMKQKEWANFPMLSANIYDKKTGERMFQAYEMFDKQGIKIAVIGLTTEDTAKLGNPEFIGAIDFRDPKEEAKKLIAELKETEKPDLIFAVTHMGHYEDGKRGINAPGDVALARYLNEGDLDMIVGGHSQEPVCMEAPNVVKKNFKPADECKPDQQNGTYIVQAHEWGKYVGRADYEFRNGELRMVSYDLIPVNLKKKVEVDGKSQRVFIESEIKEDTALLEFLRPYQEKGQEQLNVKIADTNGKLEGDRNVVRFQQTNLGRLIAVSHMERAKADFAVMNSGGVRDSIEAGEVTYKDVLTVQPFANILTYTDMTGKEVLDYLNVVATKPVDSGAYAQFAGISMTVANGKVSNVFIGGKQLRLDETYRFTVPSYNAAGGDGYPKLTGHPGYVNTGFVDAEVLKEFLEKNSPIDVNKFAPNGEIVYK.

Positions 1–21 (MKQRLIVKTALSAAILATLAG) are cleaved as a signal peptide. C22 carries the N-palmitoyl cysteine lipid modification. C22 carries the S-diacylglycerol cysteine lipid modification. Positions 45, 47, 88, 120, 221, 256, and 258 each coordinate a divalent metal cation. Residues F432 and 501–507 (YNAAGGD) contribute to the substrate site.

This sequence belongs to the 5'-nucleotidase family. Chloride serves as cofactor. Requires Mg(2+) as cofactor.

Its subcellular location is the cell outer membrane. It catalyses the reaction a ribonucleoside 5'-phosphate + H2O = a ribonucleoside + phosphate. In terms of biological role, degradation of extracellular 5'-nucleotides for nutritional needs. This Vibrio vulnificus (strain CMCP6) protein is 5'-nucleotidase (nutA).